The sequence spans 309 residues: Elongation factor Ts (309 aa).

The interval 98–101 (TDFV) is involved in Mg(2+) ion dislocation from EF-Tu.

It belongs to the EF-Ts family.

It is found in the cytoplasm. Associates with the EF-Tu.GDP complex and induces the exchange of GDP to GTP. It remains bound to the aminoacyl-tRNA.EF-Tu.GTP complex up to the GTP hydrolysis stage on the ribosome. The polypeptide is Elongation factor Ts (Orientia tsutsugamushi (strain Boryong) (Rickettsia tsutsugamushi)).